Consider the following 285-residue polypeptide: MFNWVKTAMLMAGITALFIVIGGMIGGTRGMTIALLFALAMNFFSYWFSDKMVLRMYNAQEVDENTAPQFYRMVRELATRANLPMPRVYLINEDAPNAFATGRNPEHAAVAATTGILRVLSEREMRGVMAHELAHVKHRDILISTITATMAGAISALANFAMFFGGRDENGRPANPIAGIAVALLAPIAGALIQMAISRAREFEADRGGAQISGDPQSLATALDKIHRYAAGIPFQAAEAHPATAQMMIMNPLHGGGLQNLFSTHPATEERIARLMEMARTGRFD.

Helical transmembrane passes span 7–27 (TAMLMAGITALFIVIGGMIGG) and 30–50 (GMTIALLFALAMNFFSYWFSD). Residue His131 participates in Zn(2+) binding. Glu132 is a catalytic residue. A Zn(2+)-binding site is contributed by His135. 2 helical membrane passes run 146–166 (ITATMAGAISALANFAMFFGG) and 177–197 (IAGIAVALLAPIAGALIQMAI). Glu202 is a binding site for Zn(2+).

Belongs to the peptidase M48B family. It depends on Zn(2+) as a cofactor.

Its subcellular location is the cell inner membrane. The protein is Protease HtpX homolog of Burkholderia ambifaria (strain MC40-6).